A 491-amino-acid polypeptide reads, in one-letter code: Nicotinamide phosphoribosyltransferase (491 aa).

Met-1 bears the N-acetylmethionine mark. At Tyr-188 the chain carries Phosphotyrosine. Arg-196 is a diphosphate binding site. Asp-219 contacts beta-nicotinamide D-ribonucleotide. Residues His-247 and Arg-311 each contribute to the diphosphate site. Residues 311 to 313 (RPD), 353 to 354 (GD), Gly-384, and Arg-392 contribute to the beta-nicotinamide D-ribonucleotide site. Position 472 is a phosphoserine (Ser-472).

The protein belongs to the NAPRTase family. As to quaternary structure, homodimer. Expressed in various tissues. At the highest level in liver and at the second highest in heart. The amount is higher in heart than in lung.

The protein localises to the nucleus. It localises to the cytoplasm. It is found in the secreted. The enzyme catalyses beta-nicotinamide D-ribonucleotide + diphosphate = 5-phospho-alpha-D-ribose 1-diphosphate + nicotinamide + H(+). Its pathway is cofactor biosynthesis; NAD(+) biosynthesis; nicotinamide D-ribonucleotide from 5-phospho-alpha-D-ribose 1-diphosphate and nicotinamide: step 1/1. Functionally, catalyzes the condensation of nicotinamide with 5-phosphoribosyl-1-pyrophosphate to yield nicotinamide mononucleotide, an intermediate in the biosynthesis of NAD. It is the rate limiting component in the mammalian NAD biosynthesis pathway. The secreted form behaves both as a cytokine with immunomodulating properties and an adipokine with anti-diabetic properties, it has no enzymatic activity, partly because of lack of activation by ATP, which has a low level in extracellular space and plasma. Plays a role in the modulation of circadian clock function. NAMPT-dependent oscillatory production of NAD regulates oscillation of clock target gene expression by releasing the core clock component: CLOCK-BMAL1 heterodimer from NAD-dependent SIRT1-mediated suppression. The chain is Nicotinamide phosphoribosyltransferase (Nampt) from Rattus norvegicus (Rat).